A 133-amino-acid chain; its full sequence is MNAPVWWQQLLLAMTGGALGSGLRFAIGASLIQRFGNVFPWGTLTVNLLGSFVAGVLLVWLDARGPSSWPLRALLIVGVIGGLTTFSSLMMECLVFARTDRSTMIGIYLAVTLLAGLALVFAGARTGQWLVTR.

A run of 4 helical transmembrane segments spans residues 12-32, 41-61, 76-96, and 104-124; these read LAMT…ASLI, WGTL…LVWL, IVGV…CLVF, and MIGI…FAGA. Na(+) is bound by residues glycine 81 and threonine 84.

The protein belongs to the fluoride channel Fluc/FEX (TC 1.A.43) family.

Its subcellular location is the cell inner membrane. It carries out the reaction fluoride(in) = fluoride(out). Its activity is regulated as follows. Na(+) is not transported, but it plays an essential structural role and its presence is essential for fluoride channel function. Its function is as follows. Fluoride-specific ion channel. Important for reducing fluoride concentration in the cell, thus reducing its toxicity. This is Fluoride-specific ion channel FluC from Xanthomonas axonopodis pv. citri (strain 306).